Reading from the N-terminus, the 299-residue chain is ATP phosphoribosyltransferase (299 aa).

It belongs to the ATP phosphoribosyltransferase family. Long subfamily. The cofactor is Mg(2+).

Its subcellular location is the cytoplasm. The enzyme catalyses 1-(5-phospho-beta-D-ribosyl)-ATP + diphosphate = 5-phospho-alpha-D-ribose 1-diphosphate + ATP. The protein operates within amino-acid biosynthesis; L-histidine biosynthesis; L-histidine from 5-phospho-alpha-D-ribose 1-diphosphate: step 1/9. Feedback inhibited by histidine. In terms of biological role, catalyzes the condensation of ATP and 5-phosphoribose 1-diphosphate to form N'-(5'-phosphoribosyl)-ATP (PR-ATP). Has a crucial role in the pathway because the rate of histidine biosynthesis seems to be controlled primarily by regulation of HisG enzymatic activity. In Shewanella sp. (strain ANA-3), this protein is ATP phosphoribosyltransferase.